The following is a 483-amino-acid chain: Islet cell autoantigen 1 (483 aa).

The region spanning 51–254 (ASDADLDAKL…TSHTMAAIHE (204 aa)) is the AH domain. The interval 281 to 321 (EEKKKINQQESTDAAVQEPSQLISLEEENQRKESSSFKTED) is disordered. A compositionally biased stretch (polar residues) spans 288–303 (QQESTDAAVQEPSQLI). Residues 308 to 321 (ENQRKESSSFKTED) are compositionally biased toward basic and acidic residues.

As to expression, expressed abundantly in pancreas, heart and brain with low levels of expression in lung, kidney, liver and thyroid.

The protein localises to the cytoplasm. Its subcellular location is the cytosol. It is found in the golgi apparatus membrane. The protein resides in the cytoplasmic vesicle. It localises to the secretory vesicle membrane. The protein localises to the secretory vesicle. Its subcellular location is the synaptic vesicle membrane. Its function is as follows. May play a role in neurotransmitter secretion. The protein is Islet cell autoantigen 1 (ICA1) of Homo sapiens (Human).